The sequence spans 671 residues: DNA ligase (671 aa).

Residues 32-36, 81-82, and E113 each bind NAD(+); these read DAEYD and SL. The active-site N6-AMP-lysine intermediate is K115. R136, E173, K290, and K314 together coordinate NAD(+). Residues C408, C411, C426, and C432 each coordinate Zn(2+). The region spanning 593–671 is the BRCT domain; the sequence is EIDSPFAGKT…EAEMLRLLGS (79 aa).

It belongs to the NAD-dependent DNA ligase family. LigA subfamily. Mg(2+) serves as cofactor. Mn(2+) is required as a cofactor.

The enzyme catalyses NAD(+) + (deoxyribonucleotide)n-3'-hydroxyl + 5'-phospho-(deoxyribonucleotide)m = (deoxyribonucleotide)n+m + AMP + beta-nicotinamide D-nucleotide.. In terms of biological role, DNA ligase that catalyzes the formation of phosphodiester linkages between 5'-phosphoryl and 3'-hydroxyl groups in double-stranded DNA using NAD as a coenzyme and as the energy source for the reaction. It is essential for DNA replication and repair of damaged DNA. In Shigella sonnei (strain Ss046), this protein is DNA ligase.